A 1493-amino-acid chain; its full sequence is Inactive serine/threonine-protein kinase TEX14 (1493 aa).

ANK repeat units follow at residues 27–54 (LHEY…AVNS), 55–84 (LGQT…DPNH), and 88–117 (DGST…DLRL). The Protein kinase domain occupies 198–511 (VISAQNIYSF…IMKNDLKDFI (314 aa)). Residues 204 to 212 (IYSFGFGKF) and Lys-266 contribute to the ATP site. Ser-430 is modified (phosphoserine; by PLK1). Over residues 559–573 (GSQFHSPRGHSSPTG) the composition is skewed to polar residues. Residues 559 to 615 (GSQFHSPRGHSSPTGKATPEPPVPDVSPVAQQTHRQDAASPACSVAEEARNPSPDQT) are disordered. Residues Ser-560 and Ser-660 each carry the phosphoserine modification. Disordered regions lie at residues 782–904 (HDSP…RISM) and 940–1081 (AATG…LTPD). The GPPX3Y motif lies at 789–795 (GPPASSY). The D-box motif lies at 846-854 (KASLERDRN). Polar residues-rich tracts occupy residues 855–904 (QNTS…RISM) and 1001–1020 (CGQT…QRFT). Residues 1026-1037 (PPREDEQPEHSE) show a composition bias toward basic and acidic residues. A compositionally biased stretch (polar residues) spans 1053–1064 (YSGQSAQSTCSP). A compositionally biased stretch (acidic residues) spans 1066-1075 (SSEDTEDMTD). Ser-1100 is subject to Phosphoserine. The tract at residues 1115–1167 (RPQASGEEKFQMRKNLGKNSEILTKSQFQPIRSPEGEQDETLKEPPKEVKEKD) is disordered. Over residues 1131–1144 (GKNSEILTKSQFQP) the composition is skewed to polar residues. Residues 1154–1167 (ETLKEPPKEVKEKD) show a composition bias toward basic and acidic residues. Residue Ser-1262 is modified to Phosphoserine. 2 disordered regions span residues 1288 to 1307 (GAGS…ATQR) and 1341 to 1466 (KGQQ…EEEE). Residues 1343–1362 (QQVSSTALDENTASRPGSTE) are compositionally biased toward polar residues. The segment covering 1363-1380 (NDQRHLEEQETHSNKEDS) has biased composition (basic and acidic residues). Ser-1400 bears the Phosphoserine mark. A compositionally biased stretch (basic and acidic residues) spans 1426–1456 (PAREASSKDQEVGEKKRKGEESTKPEKRKPE). Residue Ser-1492 is modified to Phosphoserine.

Belongs to the protein kinase superfamily. As to quaternary structure, interacts with KIF23 and RBM44. Interacts with CEP55; inhibiting interaction between CEP55 and PDCD6IP/ALIX and TSG101. Phosphorylated on Thr residues by CDK1 during early phases of mitosis, promoting the interaction with PLK1 and recruitment to kinetochores. Phosphorylated on Ser-430 by PLK1 during late prometaphase promotes the rapid depletion from kinetochores and its subsequent degradation by the APC/C complex.

The protein localises to the cytoplasm. It is found in the midbody. Its subcellular location is the chromosome. The protein resides in the centromere. It localises to the kinetochore. Required both for the formation of intercellular bridges during meiosis and for kinetochore-microtubule attachment during mitosis. Intercellular bridges are evolutionarily conserved structures that connect differentiating germ cells and are required for spermatogenesis and male fertility. Acts by promoting the conversion of midbodies into intercellular bridges via its interaction with CEP55: interaction with CEP55 inhibits the interaction between CEP55 and PDCD6IP/ALIX and TSG101, blocking cell abscission and leading to transform midbodies into intercellular bridges. Also plays a role during mitosis: recruited to kinetochores by PLK1 during early mitosis and regulates the maturation of the outer kinetochores and microtubule attachment. Has no protein kinase activity in vitro. This Bos taurus (Bovine) protein is Inactive serine/threonine-protein kinase TEX14 (TEX14).